A 235-amino-acid chain; its full sequence is Peptidyl-tRNA hydrolase (235 aa).

Tyrosine 14 lines the tRNA pocket. The active-site Proton acceptor is histidine 19. Phenylalanine 64, asparagine 66, and asparagine 112 together coordinate tRNA. A disordered region spans residues 186 to 235 (RTAPPRSSGGSPKTDKPAKATREPPPAAKPEATPEEETRSPLQRLVDKFR). Basic and acidic residues predominate over residues 198–207 (KTDKPAKATR).

It belongs to the PTH family. In terms of assembly, monomer.

The protein localises to the cytoplasm. It carries out the reaction an N-acyl-L-alpha-aminoacyl-tRNA + H2O = an N-acyl-L-amino acid + a tRNA + H(+). Its function is as follows. Hydrolyzes ribosome-free peptidyl-tRNAs (with 1 or more amino acids incorporated), which drop off the ribosome during protein synthesis, or as a result of ribosome stalling. In terms of biological role, catalyzes the release of premature peptidyl moieties from peptidyl-tRNA molecules trapped in stalled 50S ribosomal subunits, and thus maintains levels of free tRNAs and 50S ribosomes. The protein is Peptidyl-tRNA hydrolase of Dinoroseobacter shibae (strain DSM 16493 / NCIMB 14021 / DFL 12).